The following is a 931-amino-acid chain: Protocadherin gamma-B2 (931 aa).

The N-terminal stretch at 1-30 (MKASSGRCGLVRWLQVLLPFLLSLFPGALP) is a signal peptide. Cadherin domains lie at 31-133 (VQIR…TPLF), 134-242 (KQTK…PPVF), 243-347 (SQDV…APEV), 348-452 (IVTS…APVF), 453-562 (QQTS…APRV), and 570-675 (DGSA…LPDL). Over 31–691 (VQIRYSIPEE…SDPQAELQFY (661 aa)) the chain is Extracellular. N-linked (GlcNAc...) asparagine glycosylation is found at Asn-419 and Asn-545. Residues 692–712 (LVVALALISVLFFLAVILAIS) traverse the membrane as a helical segment. Residues 713 to 931 (LRLRRSSRSD…KKKSGKKEKK (219 aa)) are Cytoplasmic-facing. Disordered regions lie at residues 814-840 (DWRFSQAQRPGTSGSQNGDDTGTWPNN) and 901-931 (ATLTNAAGKRDGKAPAGGNGNKKKSGKKEKK). Polar residues predominate over residues 815 to 840 (WRFSQAQRPGTSGSQNGDDTGTWPNN). The span at 921-931 (NKKKSGKKEKK) shows a compositional bias: basic residues.

It localises to the cell membrane. Potential calcium-dependent cell-adhesion protein. May be involved in the establishment and maintenance of specific neuronal connections in the brain. The polypeptide is Protocadherin gamma-B2 (PCDHGB2) (Pan troglodytes (Chimpanzee)).